The following is a 184-amino-acid chain: Probable RNA 2'-phosphotransferase (184 aa).

The protein belongs to the KptA/TPT1 family.

Its function is as follows. Removes the 2'-phosphate from RNA via an intermediate in which the phosphate is ADP-ribosylated by NAD followed by a presumed transesterification to release the RNA and generate ADP-ribose 1''-2''-cyclic phosphate (APPR&gt;P). May function as an ADP-ribosylase. The polypeptide is Probable RNA 2'-phosphotransferase (Escherichia coli (strain K12 / MC4100 / BW2952)).